A 185-amino-acid chain; its full sequence is Ribosome-recycling factor (185 aa).

The protein belongs to the RRF family.

It is found in the cytoplasm. Functionally, responsible for the release of ribosomes from messenger RNA at the termination of protein biosynthesis. May increase the efficiency of translation by recycling ribosomes from one round of translation to another. This Corynebacterium glutamicum (strain R) protein is Ribosome-recycling factor.